A 244-amino-acid chain; its full sequence is 7-cyano-7-deazaguanine synthase (244 aa).

Residue Phe17–Leu27 coordinates ATP. Cys205, Cys220, Cys223, and Cys226 together coordinate Zn(2+).

It belongs to the QueC family. The cofactor is Zn(2+).

It catalyses the reaction 7-carboxy-7-deazaguanine + NH4(+) + ATP = 7-cyano-7-deazaguanine + ADP + phosphate + H2O + H(+). It functions in the pathway purine metabolism; 7-cyano-7-deazaguanine biosynthesis. Catalyzes the ATP-dependent conversion of 7-carboxy-7-deazaguanine (CDG) to 7-cyano-7-deazaguanine (preQ(0)). The chain is 7-cyano-7-deazaguanine synthase from Bordetella parapertussis (strain 12822 / ATCC BAA-587 / NCTC 13253).